Here is a 95-residue protein sequence, read N- to C-terminus: UPF0358 protein BCG9842_B1188 (95 aa).

It belongs to the UPF0358 family.

The protein is UPF0358 protein BCG9842_B1188 of Bacillus cereus (strain G9842).